Consider the following 289-residue polypeptide: MNPMDRQTEGQEPQHQDRQPGIESKMNPLPLSEDEDYRGSGKLKGKVAIITGGDSGIGRAAAIAFAKEGADISILYLDEHSDAEETRKRIEKENVRCLLIPGDVGDENHCEQAVQQTVDHFGKLDILVNNAAEQHPQDSILNISTEQLEKTFRTNIFSMFHMTKKALPHLQEGCAIINTTSITAYEGDTALIDYSSTKGAIVSFTRSMAKSLADKGIRVNAVAPGPIWTPLIPATFPEEKVKQHGLDTPMGRPGQPVEHAGAYVLLASDESSYMTGQTIHVNGGRFIST.

Residues methionine 1–proline 20 are compositionally biased toward basic and acidic residues. Residues methionine 1–glycine 39 are disordered. Isoleucine 49 to serine 73 contacts NADP(+). Serine 181 contacts substrate. Tyrosine 194 (proton acceptor) is an active-site residue.

It belongs to the short-chain dehydrogenases/reductases (SDR) family.

This is an uncharacterized protein from Bacillus subtilis (strain 168).